The chain runs to 93 residues: Beta-defensin 128 (93 aa).

Residues 1–18 (MKLFLVLIILLFEVLTDG) form the signal peptide. 3 disulfide bridges follow: Cys24–Cys52, Cys32–Cys46, and Cys36–Cys53.

This sequence belongs to the beta-defensin family.

It localises to the secreted. Functionally, has antibacterial activity. The sequence is that of Beta-defensin 128 (DEFB128) from Homo sapiens (Human).